Reading from the N-terminus, the 348-residue chain is Eukaryotic translation initiation factor 3 subunit H (348 aa).

Residues 35–169 (VQIDGLVVLK…LKAYRLTPKL (135 aa)) form the MPN domain. Over residues 267 to 285 (QQQKHQYQQRRQQENIQRQ) the composition is skewed to low complexity. The segment at 267 to 311 (QQQKHQYQQRRQQENIQRQSRGEPPLPEEDINKLFKPPQPPPRME) is disordered.

It belongs to the eIF-3 subunit H family. Component of the eukaryotic translation initiation factor 3 (eIF-3) complex, which is composed of 13 subunits: EIF3A, EIF3B, EIF3C, EIF3D, EIF3E, EIF3F, EIF3G, EIF3H, EIF3I, EIF3J, EIF3K, EIF3L and EIF3M.

It is found in the cytoplasm. Functionally, component of the eukaryotic translation initiation factor 3 (eIF-3) complex, which is involved in protein synthesis of a specialized repertoire of mRNAs and, together with other initiation factors, stimulates binding of mRNA and methionyl-tRNAi to the 40S ribosome. The eIF-3 complex specifically targets and initiates translation of a subset of mRNAs involved in cell proliferation. In Taeniopygia guttata (Zebra finch), this protein is Eukaryotic translation initiation factor 3 subunit H.